A 254-amino-acid chain; its full sequence is Ciliary microtubule associated protein 1A (254 aa).

STPGR repeat units lie at residues 180-205 (PGPA…MAAR) and 216-241 (PGPG…FGIK). The tract at residues 207 to 226 (EPPGDKTLKPGPGAHSPEKV) is disordered.

It belongs to the CIMAP family. In terms of assembly, microtubule inner protein component of sperm flagellar doublet microtubules.

The protein resides in the cytoplasm. It is found in the cytoskeleton. The protein localises to the flagellum axoneme. Outer dense fibers are filamentous structures located on the outside of the axoneme in the midpiece and principal piece of the mammalian sperm tail. May help to maintain the passive elastic structures and elastic recoil of the sperm tail. This is Ciliary microtubule associated protein 1A (CIMAP1A) from Bos taurus (Bovine).